A 397-amino-acid polypeptide reads, in one-letter code: Tryptophan synthase beta chain (397 aa).

At lysine 87 the chain carries N6-(pyridoxal phosphate)lysine.

Belongs to the TrpB family. Tetramer of two alpha and two beta chains. Requires pyridoxal 5'-phosphate as cofactor.

The catalysed reaction is (1S,2R)-1-C-(indol-3-yl)glycerol 3-phosphate + L-serine = D-glyceraldehyde 3-phosphate + L-tryptophan + H2O. It participates in amino-acid biosynthesis; L-tryptophan biosynthesis; L-tryptophan from chorismate: step 5/5. In terms of biological role, the beta subunit is responsible for the synthesis of L-tryptophan from indole and L-serine. The chain is Tryptophan synthase beta chain from Salmonella agona (strain SL483).